Reading from the N-terminus, the 473-residue chain is Glutamate--tRNA ligase (473 aa).

The 'HIGH' region motif lies at 11–21; sequence PSPTGFLHIGG. The 'KMSKS' region motif lies at 240-244; that stretch reads KLSKR. ATP is bound at residue Lys-243.

Belongs to the class-I aminoacyl-tRNA synthetase family. Glutamate--tRNA ligase type 1 subfamily. In terms of assembly, monomer.

The protein resides in the cytoplasm. The enzyme catalyses tRNA(Glu) + L-glutamate + ATP = L-glutamyl-tRNA(Glu) + AMP + diphosphate. In terms of biological role, catalyzes the attachment of glutamate to tRNA(Glu) in a two-step reaction: glutamate is first activated by ATP to form Glu-AMP and then transferred to the acceptor end of tRNA(Glu). The polypeptide is Glutamate--tRNA ligase (Rhodopseudomonas palustris (strain ATCC BAA-98 / CGA009)).